Here is a 436-residue protein sequence, read N- to C-terminus: ATP-dependent protease ATPase subunit HslU (436 aa).

Residues I18, 60–65 (GVGKTE), D249, E314, and R386 contribute to the ATP site.

The protein belongs to the ClpX chaperone family. HslU subfamily. A double ring-shaped homohexamer of HslV is capped on each side by a ring-shaped HslU homohexamer. The assembly of the HslU/HslV complex is dependent on binding of ATP.

It localises to the cytoplasm. ATPase subunit of a proteasome-like degradation complex; this subunit has chaperone activity. The binding of ATP and its subsequent hydrolysis by HslU are essential for unfolding of protein substrates subsequently hydrolyzed by HslV. HslU recognizes the N-terminal part of its protein substrates and unfolds these before they are guided to HslV for hydrolysis. This chain is ATP-dependent protease ATPase subunit HslU, found in Chelativorans sp. (strain BNC1).